Here is a 343-residue protein sequence, read N- to C-terminus: Ricin B-like lectin R40G2 (343 aa).

In terms of domain architecture, Ricin B-type lectin spans 194-340; it reads TVRVFSAAGE…CEGDNQRWKI (147 aa).

Functionally, lectin which binds carbohydrates in vitro. Interacts through its lectin domain with glycan structures containing specific motifs. This Oryza sativa subsp. japonica (Rice) protein is Ricin B-like lectin R40G2.